The sequence spans 142 residues: Putative FK506-binding protein 9-like protein (142 aa).

Positions 1-49 constitute a PPIase FKBP-type domain; it reads MDMGLREMCVGEKRTVIIPPHLGYGEAGVDGEVPGSAVLVFDIELLELV. EF-hand domains lie at 60–95 and 105–140; these read WNGEVSPNLFEEIDKDGNGEVLLEEFSEYIHAQVAS and DAELIVKNMFTNQDRNGDGKVTAEEFKLKDQEAKQD. Ca(2+)-binding residues include Asp-118, Asn-120, Asp-122, Lys-124, and Glu-129.

The sequence is that of Putative FK506-binding protein 9-like protein (FKBP9P1) from Homo sapiens (Human).